The chain runs to 346 residues: MTPASALVDQRSRPLRVLRLSLTARCNLACPYCCPDLEDPPDLLSLEQQLRLIRVACRLGIHSLRLTGGEPLLSARLLPLLQAIAAARATPGDPLQGLQQVALTTNGTLLSDQRACDLRQAGLDRITVSLDGVDGAVVARMAGRPTATAGDSLARKVLGGLASARSAGFDPLAGELKLNAVIQRGVNEDQLLPLADLARDQGVELRLIEYMDVGNRNQWRLDQVLSAAEMVTRIRARWPLQAVGRPTGGTAQRWRYVDGGGHLGVIASISEPFCGDCNRLRVTADGQAFRCLFASVGTDLKPALHCEAELLRLVADLWRRRDDRYSDERQQTTGSMPHAEMAYLGG.

A Radical SAM core domain is found at 10–240; sequence QRSRPLRVLR…VTRIRARWPL (231 aa). GTP is bound at residue Arg19. Residues Cys26 and Cys30 each contribute to the [4Fe-4S] cluster site. Tyr32 contributes to the S-adenosyl-L-methionine binding site. Cys33 is a binding site for [4Fe-4S] cluster. Arg65 is a binding site for GTP. S-adenosyl-L-methionine is bound at residue Gly69. Thr104 contacts GTP. Ser129 is an S-adenosyl-L-methionine binding site. Lys177 provides a ligand contact to GTP. Met211 is an S-adenosyl-L-methionine binding site. [4Fe-4S] cluster contacts are provided by Cys274 and Cys277. A GTP-binding site is contributed by 279–281; the sequence is RLR. Cys291 lines the [4Fe-4S] cluster pocket. Positions 326–346 are disordered; the sequence is SDERQQTTGSMPHAEMAYLGG.

Belongs to the radical SAM superfamily. MoaA family. In terms of assembly, monomer and homodimer. [4Fe-4S] cluster serves as cofactor.

The enzyme catalyses GTP + AH2 + S-adenosyl-L-methionine = (8S)-3',8-cyclo-7,8-dihydroguanosine 5'-triphosphate + 5'-deoxyadenosine + L-methionine + A + H(+). It functions in the pathway cofactor biosynthesis; molybdopterin biosynthesis. In terms of biological role, catalyzes the cyclization of GTP to (8S)-3',8-cyclo-7,8-dihydroguanosine 5'-triphosphate. This Parasynechococcus marenigrum (strain WH8102) protein is GTP 3',8-cyclase.